A 311-amino-acid polypeptide reads, in one-letter code: MYSEADRTLWHGRIHDNDNHAHFTNSQLVQVVDAEGELTERFDVGILGYAVDRGVYLNQGRVGTKQGPDAIRTKFGNLPLMHDLSIADFGNVTTEEKFVEDVQHEYAELIDKTNDYAKFHLLIGGGHDISYAHFKGLKALYPEQSIGVINIDAHFDLRDSEYGTSGTGFKQILDEDADAGYLVLGLQEAGNTQHLFEVAEQYDVKYVLAEDIDYDTTDEIIQSFIEQYDIIMLTLCLDVIDSAFAPGVSAPCSFGLTPQQVERLIRAVLSYGKTRHLSIAEMNPEYDIDGRTAKLVGHIMFFAVHRNPSIL.

Mn(2+) is bound by residues H127, D152, H154, D156, C236, and D238.

It belongs to the arginase family. Mn(2+) is required as a cofactor.

It catalyses the reaction N-formimidoyl-L-glutamate + H2O = formamide + L-glutamate. Its pathway is amino-acid degradation; L-histidine degradation into L-glutamate; L-glutamate from N-formimidoyl-L-glutamate (hydrolase route): step 1/1. Catalyzes the conversion of N-formimidoyl-L-glutamate to L-glutamate and formamide. This chain is Formimidoylglutamase, found in Macrococcus caseolyticus (strain JCSC5402) (Macrococcoides caseolyticum).